The sequence spans 858 residues: Taste receptor type 1 member 3 (858 aa).

An N-terminal signal peptide occupies residues 1 to 20 (MPALAIMGLSLAAFLELGMG). Residues 21–572 (ASLCLSQQFK…RPKFLAWGEP (552 aa)) are Extracellular-facing. Residue asparagine 58 is glycosylated (N-linked (GlcNAc...) asparagine; when associated with variant T-60). N-linked (GlcNAc...) asparagine glycosylation is found at asparagine 85, asparagine 130, asparagine 203, asparagine 264, asparagine 379, asparagine 387, asparagine 418, asparagine 439, and asparagine 482. The helical transmembrane segment at 573–593 (VVLSLLLLLCLVLGLALAALG) threads the bilayer. The Cytoplasmic segment spans residues 594–610 (LSVHHWDSPLVQASGGS). A helical transmembrane segment spans residues 611–631 (QFCFGLICLGLFCLSVLLFPG). Residues 632 to 644 (RPSSASCLAQQPM) are Extracellular-facing. A helical membrane pass occupies residues 645 to 665 (AHLPLTGCLSTLFLQAAETFV). At 666–687 (ESELPLSWANWLCSYLRGLWAW) the chain is on the cytoplasmic side. A helical membrane pass occupies residues 688-708 (LVVLLATFVEAALCAWYLIAF). The Extracellular portion of the chain corresponds to 709-735 (PPEVVTDWSVLPTEVLEHCHVRSWVSL). Residues 736-756 (GLVHITNAMLAFLCFLGTFLV) traverse the membrane as a helical segment. The Cytoplasmic segment spans residues 757-767 (QSQPGRYNRAR). Residues 768-788 (GLTFAMLAYFITWVSFVPLLA) traverse the membrane as a helical segment. Topologically, residues 789–796 (NVQVAYQP) are extracellular. A helical transmembrane segment spans residues 797–817 (AVQMGAILVCALGILVTFHLP). The Cytoplasmic portion of the chain corresponds to 818-858 (KCYVLLWLPKLNTQEFFLGRNAKKAADENSGGGEAAQGHNE).

This sequence belongs to the G-protein coupled receptor 3 family. TAS1R subfamily. Forms homodimers or heterodimers with TAS1R1 and TAS1R2. In terms of processing, the Thr-60 variant is predicted to introduce a novel N-linked glycosylation site at Asn-58. The addition of even a short carbohydrate group at Asn-58 is predicted to disrupt one of the contact surfaces required for stability of a dimer. Therefore a Thr-60 variant N-glycosylated at Asn-58 is predicted to be precluded from forming homodimers or heterodimers. In terms of tissue distribution, expressed in circumvallate, foliate and fungiform taste papillae as well as in taste buds on the palate. Also expressed in testis. Not expressed in brain, heart, kidney, liver or spleen. The topographic distribution in various taste papillae is different from those of other T1R members.

Its subcellular location is the cell membrane. Putative taste receptor. TAS1R1/TAS1R3 responds to the umami taste stimulus (the taste of monosodium glutamate) and also to most of the 20 standard L-amino acids, but not to their D-enantiomers or other compounds. TAS1R2/TAS1R3 recognizes diverse natural and synthetic sweeteners. TAS1R3 is essential for the recognition and response to the disaccharide trehalose. Sequence differences within and between species can significantly influence the selectivity and specificity of taste responses. This chain is Taste receptor type 1 member 3 (Tas1r3), found in Mus musculus (Mouse).